A 100-amino-acid chain; its full sequence is Urease subunit gamma (100 aa).

Belongs to the urease gamma subunit family. In terms of assembly, heterotrimer of UreA (gamma), UreB (beta) and UreC (alpha) subunits. Three heterotrimers associate to form the active enzyme.

Its subcellular location is the cytoplasm. The enzyme catalyses urea + 2 H2O + H(+) = hydrogencarbonate + 2 NH4(+). Its pathway is nitrogen metabolism; urea degradation; CO(2) and NH(3) from urea (urease route): step 1/1. In Granulibacter bethesdensis (strain ATCC BAA-1260 / CGDNIH1), this protein is Urease subunit gamma.